The following is a 577-amino-acid chain: MMKRTSLIGQLGQAQQQQTVTLQGWVSRRRDLGGLIFLELRDRSGTVQVQVEPDSPAFAEADRLRAEYVAEIEGTFQPRPESQRKGGLADFEVIASRVKVLNAAKTPPFELDKGESVAEDIRLKYRYLDLRRPEMQRALMLRSKAVTAVTEFLDAEGFIQVETPMLTKSTPEGARDFLVPSRLNPGEFYALPQSPQLFKQLLMIAGFDRYYQLARCFRDEDLRADRQPDFTQLDMEMSFVEQDDVLEVQERLLAHVFRRVLDVELPLPFPRMSYFDAMDRYGSDKPDLRFDSAFTDVTGLFRGGEFAAFASAPSVKVLVAPELTRKQIDELERVAKQNGAGGLAWLRRDGEGFTGGISKFVGGIAPQLIEQTGVAQGGTLLFAAGEWKKAVTALGAVRLALRDLFDLAAGGPQFHVSWVVDFPQLEFDEDSQSWTYMHHPFTAPHPGDVALFGTERQGEMRAQAYDLVMNGFEIGGGSVRIHDPEVQAKMFQAIGFSEEAAREKFGFFLDALEYGTPPHGGIAWGFDRLLMLMSGAGSIREVIAFPKNNRGADLMAQAPSPVEDAQLAEVGVQVRGE.

Glutamate 172 is an L-aspartate binding site. An aspartate region spans residues 196 to 199; that stretch reads QLFK. Arginine 218 contributes to the L-aspartate binding site. ATP is bound by residues 218–220 and glutamine 227; that span reads RDE. Histidine 438 contributes to the L-aspartate binding site. Residue glutamate 473 coordinates ATP. Arginine 480 serves as a coordination point for L-aspartate. Residue 525–528 participates in ATP binding; it reads GFDR.

The protein belongs to the class-II aminoacyl-tRNA synthetase family. Type 1 subfamily. Homodimer.

It is found in the cytoplasm. The catalysed reaction is tRNA(Asp) + L-aspartate + ATP = L-aspartyl-tRNA(Asp) + AMP + diphosphate. Catalyzes the attachment of L-aspartate to tRNA(Asp) in a two-step reaction: L-aspartate is first activated by ATP to form Asp-AMP and then transferred to the acceptor end of tRNA(Asp). Is specific for tRNA(Asp) since it cannot aspartylate tRNA(Asn). This Deinococcus radiodurans (strain ATCC 13939 / DSM 20539 / JCM 16871 / CCUG 27074 / LMG 4051 / NBRC 15346 / NCIMB 9279 / VKM B-1422 / R1) protein is Aspartate--tRNA(Asp) ligase (aspS1).